A 1397-amino-acid chain; its full sequence is Probable cyclin-dependent serine/threonine-protein kinase DDB_G0292550 (1397 aa).

The Protein kinase domain maps to 4–287 (FQIIELIGSG…TKEALNHPWF (284 aa)). Residues 10-18 (IGSGSYGKV) and K33 each bind ATP. The active-site Proton acceptor is the D124. Disordered stretches follow at residues 412–567 (NNNN…NNNN), 671–728 (PLSI…NNGF), 763–831 (NEMG…NGNN), 845–949 (NNNN…YANH), 996–1101 (NGLA…NTHN), 1115–1174 (NNGF…NSPV), 1227–1324 (NSAS…SFGL), and 1340–1397 (KKKK…IVLD). The segment covering 676-715 (SQHHNTSSSDTHNNNNNNYNNNNNNNNNINNNNINSIHNQ) has biased composition (low complexity). Low complexity-rich tracts occupy residues 845–941 (NNNN…NGNG), 1012–1021 (NSNNNNSGNN), 1028–1101 (NTFN…NTHN), and 1115–1155 (NNGF…TKNN). A compositionally biased stretch (polar residues) spans 1156–1171 (TQFGPNILSSTQTSHN). Low complexity-rich tracts occupy residues 1253 to 1321 (NNNN…NNNS) and 1354 to 1380 (SSSQ…SQTQ).

Belongs to the protein kinase superfamily. CMGC Ser/Thr protein kinase family. CDC2/CDKX subfamily.

The enzyme catalyses L-seryl-[protein] + ATP = O-phospho-L-seryl-[protein] + ADP + H(+). The catalysed reaction is L-threonyl-[protein] + ATP = O-phospho-L-threonyl-[protein] + ADP + H(+). This Dictyostelium discoideum (Social amoeba) protein is Probable cyclin-dependent serine/threonine-protein kinase DDB_G0292550.